The chain runs to 451 residues: Endosomal transmembrane epsin interactor 1 (451 aa).

The first 29 residues, 1–29 (MILLVNLFVLLSVVCILLNLAGFILGCQG), serve as a signal peptide directing secretion. Over 30-85 (AQFVSSVPRCDLVDLGEGKICFCCEEFQPAKCTDKENALKLFPVQPCSAVHLLLKK) the chain is Lumenal. The helical transmembrane segment at 86-106 (VLFALCALNALTTTVCLVAAA) threads the bilayer. The Cytoplasmic portion of the chain corresponds to 107–451 (LRYLQIFASR…LIGVIRETVL (345 aa)). A mediates interaction with EPN1 region spans residues 107 to 451 (LRYLQIFASR…LIGVIRETVL (345 aa)). 2 consecutive short sequence motifs (PPxY; mediates interaction with ITCH) follow at residues 148 to 151 (PPSY) and 194 to 197 (PPPY). Over residues 204-213 (TDQEQESSFQ) the composition is skewed to polar residues. A disordered region spans residues 204-224 (TDQEQESSFQMPEGPETAASP). Residue Lys274 forms a Glycyl lysine isopeptide (Lys-Gly) (interchain with G-Cter in ubiquitin) linkage. Ser275 is subject to Phosphoserine. Lys365 participates in a covalent cross-link: Glycyl lysine isopeptide (Lys-Gly) (interchain with G-Cter in ubiquitin).

The protein belongs to the ENTREP family. As to quaternary structure, interacts with ITCH; enhances the ubiquitination of CXCR4 by ITCH and the subsequent endocytosis and desensitization of the receptor. Interacts with EPN1.

It localises to the early endosome membrane. The protein resides in the late endosome membrane. Its subcellular location is the recycling endosome membrane. The protein localises to the cell membrane. Its function is as follows. Functions as an activator of the E3 ubiquitin protein ligase ITCH in the ubiquitination of the CXCL12-activated CXCR4 receptor. Thereby, triggers CXCR4 endocytosis and desensitization, negatively regulating the CXCL12/CXCR4 signaling pathway. The sequence is that of Endosomal transmembrane epsin interactor 1 from Mus musculus (Mouse).